The chain runs to 185 residues: Large ribosomal subunit protein uL5 (185 aa).

It belongs to the universal ribosomal protein uL5 family. In terms of assembly, part of the 50S ribosomal subunit; part of the 5S rRNA/L5/L18/L25 subcomplex. Contacts the 5S rRNA and the P site tRNA. Forms a bridge to the 30S subunit in the 70S ribosome.

This is one of the proteins that bind and probably mediate the attachment of the 5S RNA into the large ribosomal subunit, where it forms part of the central protuberance. In the 70S ribosome it contacts protein S13 of the 30S subunit (bridge B1b), connecting the 2 subunits; this bridge is implicated in subunit movement. Contacts the P site tRNA; the 5S rRNA and some of its associated proteins might help stabilize positioning of ribosome-bound tRNAs. This is Large ribosomal subunit protein uL5 from Caulobacter vibrioides (strain NA1000 / CB15N) (Caulobacter crescentus).